The sequence spans 453 residues: Sensor histidine kinase CpxA (453 aa).

At 1–4 (MTAR) the chain is on the cytoplasmic side. The helical transmembrane segment at 5-25 (IFAIFWLTLALVLMLVLMLPK) threads the bilayer. Residues 26–159 (LDSRQMTELL…SDFINLLFDR (134 aa)) are Periplasmic-facing. A helical membrane pass occupies residues 160–180 (PLLLLIVTMLVSAPLLLWLAW). The HAMP domain maps to 180–233 (WSLAKPARKLKNAADEVAQGNLRQHPELEAGPQEFLAAGASFNQMVTALERMMT). The Cytoplasmic portion of the chain corresponds to 181–453 (SLAKPARKLK…TIWLPLYKRT (273 aa)). Residues 241–451 (DISHELRTPL…RLTIWLPLYK (211 aa)) enclose the Histidine kinase domain. The active-site Nucleophile is the His244. Residue His244 is modified to Phosphohistidine; by autocatalysis. ATP is bound by residues 244–247 (HELR), 355–360 (RNALRY), Asp382, 401–402 (RT), and 412–417 (GTGLGL).

Interacts with cognate response regulator CpxR.

The protein localises to the cell inner membrane. The catalysed reaction is ATP + protein L-histidine = ADP + protein N-phospho-L-histidine.. The two-component system is activated by envelope stress such as overexpression of some (misfolded) periplasmic proteins. Its function is as follows. Histidine kinase member of the two-component regulatory system CpxA/CpxR which responds to envelope stress response by activating or, in some cases, repressing expression of downstream genes. Activates CpxR by phosphorylation. The chain is Sensor histidine kinase CpxA from Klebsiella pneumoniae subsp. pneumoniae (strain HS11286).